Consider the following 225-residue polypeptide: Ribose-5-phosphate isomerase A (225 aa).

Substrate-binding positions include 32–35 (TGST), 85–88 (DGAD), and 98–101 (KGGG). Catalysis depends on glutamate 107, which acts as the Proton acceptor. Substrate is bound at residue lysine 125.

Belongs to the ribose 5-phosphate isomerase family. As to quaternary structure, homodimer.

It carries out the reaction aldehydo-D-ribose 5-phosphate = D-ribulose 5-phosphate. It participates in carbohydrate degradation; pentose phosphate pathway; D-ribose 5-phosphate from D-ribulose 5-phosphate (non-oxidative stage): step 1/1. Functionally, catalyzes the reversible conversion of ribose-5-phosphate to ribulose 5-phosphate. This is Ribose-5-phosphate isomerase A from Hahella chejuensis (strain KCTC 2396).